The primary structure comprises 244 residues: 7-cyano-7-deazaguanine synthase (244 aa).

Residue 14–24 coordinates ATP; the sequence is FSGGQDSATCV. Residues C202, C217, C220, and C223 each contribute to the Zn(2+) site.

Belongs to the QueC family. The cofactor is Zn(2+).

The catalysed reaction is 7-carboxy-7-deazaguanine + NH4(+) + ATP = 7-cyano-7-deazaguanine + ADP + phosphate + H2O + H(+). It participates in purine metabolism; 7-cyano-7-deazaguanine biosynthesis. Functionally, catalyzes the ATP-dependent conversion of 7-carboxy-7-deazaguanine (CDG) to 7-cyano-7-deazaguanine (preQ(0)). The polypeptide is 7-cyano-7-deazaguanine synthase (Burkholderia thailandensis (strain ATCC 700388 / DSM 13276 / CCUG 48851 / CIP 106301 / E264)).